Consider the following 298-residue polypeptide: Inosose dehydratase 1 (298 aa).

This sequence belongs to the IolE/MocC family. Requires glutathione as cofactor. It depends on Co(2+) as a cofactor. Mn(2+) is required as a cofactor.

The enzyme catalyses scyllo-inosose = 3D-3,5/4-trihydroxycyclohexane-1,2-dione + H2O. It participates in polyol metabolism; myo-inositol degradation into acetyl-CoA; acetyl-CoA from myo-inositol: step 2/7. Its function is as follows. Catalyzes the dehydration of inosose (2-keto-myo-inositol, 2KMI or 2,4,6/3,5-pentahydroxycyclohexanone) to 3D-(3,5/4)-trihydroxycyclohexane-1,2-dione (D-2,3-diketo-4-deoxy-epi-inositol). The sequence is that of Inosose dehydratase 1 from Bacillus cereus (strain ZK / E33L).